The primary structure comprises 204 residues: uncharacterized protein (204 aa).

This is an uncharacterized protein from Caenorhabditis elegans.